Reading from the N-terminus, the 244-residue chain is UL16-binding protein 1 (244 aa).

The N-terminal stretch at 1-25 (MAAAASPAFLLCLPLLHLLSGWSRA) is a signal peptide. The interval 26 to 117 (GWVDTHCLCY…IQVENLIPIE (92 aa)) is MHC class I alpha-1 like. Cys50 and Cys66 are oxidised to a cystine. Residue Asn82 is glycosylated (N-linked (GlcNAc...) asparagine). The interval 118 to 208 (PLTLQARMSC…MYWEQMLDPT (91 aa)) is MHC class I alpha-2 like. Cys127 and Cys190 form a disulfide bridge. The GPI-anchor amidated glycine moiety is linked to residue Gly216. A propeptide spans 217-244 (TTQPKAMATTLSPWSLLIIFLCFILAGR) (removed in mature form).

Belongs to the MHC class I family. Interacts with KLRK1/NKG2D. Does not bind to beta2-microglobulin. As to quaternary structure, (Microbial infection) In CMV-infected cells, interacts with the viral glycoprotein UL16; this interaction causes ULBP1 retention in the endoplasmic reticulum and cis-Golgi and prevents binding to and activation of KLRK1/NKG2D, providing CMV with an immune evasion mechanism. As to expression, expressed in T-cells, B-cells, erythroleukemia cell lines and in a wide range of tissues including heart, brain, lung, liver, testis, lymph node, thymus, tonsil and bone marrow. Also found in fetal heart, brain, lung and liver.

It is found in the cell membrane. The protein resides in the endoplasmic reticulum. In terms of biological role, binds and activates the KLRK1/NKG2D receptor, mediating natural killer cell cytotoxicity. The chain is UL16-binding protein 1 (ULBP1) from Homo sapiens (Human).